Consider the following 206-residue polypeptide: Protein Nef (206 aa).

Residues 1 to 46 (MGNKWSKCSTVGRPAIRERMRRAPAAEGVGPASQDSDKYGALTSSS) are disordered. Residue glycine 2 is the site of N-myristoyl glycine; by host attachment. The residue at position 6 (serine 6) is a Phosphoserine; by host. The acidic; interacts with host PACS1 and PACS2; stabilizes the interaction of NEF/MHC-I with host AP1M1; necessary for MHC-I internalization stretch occupies residues 61–65 (QEEEE). The tract at residues 69–78 (PVRPQVPLRP) is SH3-binding; interaction with Src family tyrosine kinases. The PxxP; stabilizes the interaction of NEF/MHC-I with host AP1M1; necessary for MHC-I internalization signature appears at 72 to 75 (PQVP). The mediates dimerization, Nef-PTE1 interaction stretch occupies residues 108 to 124 (DILDLWVYNTQGYFPDW). Positions 148 to 180 (VDPREVEEANTGENNSLLHPMSLHGMEDSHREV) are binding to ATP6V1H. A Dileucine internalization motif; necessary for CD4 internalization motif is present at residues 164 to 165 (LL). The Diacidic; necessary for CD4 internalization motif lies at 174–175 (ED).

It belongs to the lentivirus primate group Nef protein family. Monomer; cytosolic form. Homodimer; membrane bound form. Interacts with Nef associated p21-activated kinase (PAK2); this interaction activates PAK2. Associates with the Nef-MHC-I-AP1 complex; this complex is required for MHC-I internalization. Interacts (via C-terminus) with host PI3-kinase. Interacts with host PACS1; this interaction seems to be weak. Interacts with host PACS2. Interacts with host LCK and MAPK3; these interactions inhibit the kinase activity of the latter. Interacts with host ATP6V1H; this interaction may play a role in CD4 endocytosis. Associates with the CD4-Nef-AP2 complex; this complex is required for CD4 internalization. Interacts with host AP2 subunit alpha and AP2 subunit sigma2. Interacts with TCR-zeta chain; this interaction up-regulates the Fas ligand (FasL) surface expression. Interacts with host HCK, LYN, and SRC; these interactions activate the Src family kinases. Interacts with MAP3K5; this interaction inhibits the Fas and TNFR-mediated death signals. Interacts with beta-COP and PTE1. Interacts with human RACK1; this increases Nef phosphorylation by PKC. Interacts with TP53; this interaction decreases the half-life of TP53, protecting the infected cell against p53-mediated apoptosis. The virion-associated Nef proteins are cleaved by the viral protease to release the soluble C-terminal core protein. Nef is probably cleaved concomitantly with viral structural proteins on maturation of virus particles. In terms of processing, myristoylated. Post-translationally, phosphorylated on serine residues, probably by host PKCdelta and theta.

The protein resides in the host cell membrane. Its subcellular location is the virion. It localises to the secreted. The protein localises to the host Golgi apparatus membrane. In terms of biological role, factor of infectivity and pathogenicity, required for optimal virus replication. Alters numerous pathways of T-lymphocyte function and down-regulates immunity surface molecules in order to evade host defense and increase viral infectivity. Alters the functionality of other immunity cells, like dendritic cells, monocytes/macrophages and NK cells. Functionally, in infected CD4(+) T-lymphocytes, down-regulates the surface MHC-I, mature MHC-II, CD4, CD28, CCR5 and CXCR4 molecules. Mediates internalization and degradation of host CD4 through the interaction of with the cytoplasmic tail of CD4, the recruitment of AP-2 (clathrin adapter protein complex 2), internalization through clathrin coated pits, and subsequent transport to endosomes and lysosomes for degradation. Diverts host MHC-I molecules to the trans-Golgi network-associated endosomal compartments by an endocytic pathway to finally target them for degradation. MHC-I down-regulation may involve AP-1 (clathrin adapter protein complex 1) or possibly Src family kinase-ZAP70/Syk-PI3K cascade recruited by PACS2. In consequence infected cells are masked for immune recognition by cytotoxic T-lymphocytes. Decreasing the number of immune receptors also prevents reinfection by more HIV particles (superinfection). Down-regulates host SERINC3 and SERINC5 thereby excluding these proteins from the viral particles. Virion infectivity is drastically higher when SERINC3 or SERINC5 are excluded from the viral envelope, because these host antiviral proteins impair the membrane fusion event necessary for subsequent virion penetration. Bypasses host T-cell signaling by inducing a transcriptional program nearly identical to that of anti-CD3 cell activation. Interaction with TCR-zeta chain up-regulates the Fas ligand (FasL). Increasing surface FasL molecules and decreasing surface MHC-I molecules on infected CD4(+) cells send attacking cytotoxic CD8+ T-lymphocytes into apoptosis. Its function is as follows. Plays a role in optimizing the host cell environment for viral replication without causing cell death by apoptosis. Protects the infected cells from apoptosis in order to keep them alive until the next virus generation is ready to strike. Inhibits the Fas and TNFR-mediated death signals by blocking MAP3K5/ASK1. Decreases the half-life of TP53, protecting the infected cell against p53-mediated apoptosis. Inhibits the apoptotic signals regulated by the Bcl-2 family proteins through the formation of a Nef/PI3-kinase/PAK2 complex that leads to activation of PAK2 and induces phosphorylation of host BAD. In terms of biological role, extracellular Nef protein targets CD4(+) T-lymphocytes for apoptosis by interacting with CXCR4 surface receptors. The protein is Protein Nef of Human immunodeficiency virus type 1 group M subtype C (isolate 92BR025) (HIV-1).